A 337-amino-acid polypeptide reads, in one-letter code: MGKIKIGINGFGRIGRLVARVALQSEDVELVAVNDPFITTDYMTYMFKYDTVHGHWKHSDITLKDSKTLLFGDKPVTVFGIRNPEEIPWGEAGAEYVVESTGVFTDKDKAAAHLKGGAKKVVISAPSKDAPMFVVGVNEDKYTSDVNIVSNASCTTNCLAPLAKVIHDNFGIVEGLMTTVHAITATQKTVDGPSAKDWRGGRAASFNIIPSSTGAAKAVGKVLPDLNGKLTGMSFRVPTVDVSVVDLTVRIEKGASYEDIKKAIKAASEGPLKGIMGYVEEDLVSTDFLGDSRSSIFDAKAGIALNDHFVKLVSWYDNEWGYSNRVVDLIRHMFKTQ.

The binding to NAD stretch occupies residues 1–151 (MGKIKIGING…YTSDVNIVSN (151 aa)). NAD(+) is bound by residues 13-14 (RI), D35, and R82. A catalytic region spans residues 152–337 (ASCTTNCLAP…DLIRHMFKTQ (186 aa)). D-glyceraldehyde 3-phosphate contacts are provided by residues 153–155 (SCT), T184, 213–214 (TG), and R236. C154 (nucleophile) is an active-site residue. An NAD(+)-binding site is contributed by N318.

It belongs to the glyceraldehyde-3-phosphate dehydrogenase family. In terms of assembly, homotetramer.

It localises to the cytoplasm. It catalyses the reaction D-glyceraldehyde 3-phosphate + phosphate + NAD(+) = (2R)-3-phospho-glyceroyl phosphate + NADH + H(+). It participates in carbohydrate degradation; glycolysis; pyruvate from D-glyceraldehyde 3-phosphate: step 1/5. Key enzyme in glycolysis that catalyzes the first step of the pathway by converting D-glyceraldehyde 3-phosphate (G3P) into 3-phospho-D-glyceroyl phosphate. Essential for the maintenance of cellular ATP levels and carbohydrate metabolism. In Zea mays (Maize), this protein is Glyceraldehyde-3-phosphate dehydrogenase 1, cytosolic (GAPC1).